A 341-amino-acid chain; its full sequence is UDP-3-O-acylglucosamine N-acyltransferase (341 aa).

H242 acts as the Proton acceptor in catalysis.

This sequence belongs to the transferase hexapeptide repeat family. LpxD subfamily. As to quaternary structure, homotrimer.

The enzyme catalyses a UDP-3-O-[(3R)-3-hydroxyacyl]-alpha-D-glucosamine + a (3R)-hydroxyacyl-[ACP] = a UDP-2-N,3-O-bis[(3R)-3-hydroxyacyl]-alpha-D-glucosamine + holo-[ACP] + H(+). The protein operates within bacterial outer membrane biogenesis; LPS lipid A biosynthesis. In terms of biological role, catalyzes the N-acylation of UDP-3-O-acylglucosamine using 3-hydroxyacyl-ACP as the acyl donor. Is involved in the biosynthesis of lipid A, a phosphorylated glycolipid that anchors the lipopolysaccharide to the outer membrane of the cell. This is UDP-3-O-acylglucosamine N-acyltransferase from Haemophilus influenzae (strain ATCC 51907 / DSM 11121 / KW20 / Rd).